We begin with the raw amino-acid sequence, 283 residues long: Lolitrem B biosynthesis cluster protein S (283 aa).

The signal sequence occupies residues Met1–Gly27. The next 5 helical transmembrane spans lie at Trp73–Leu93, Leu112–Ile132, Ile157–Leu177, Met219–Ala239, and Val250–Leu270.

This sequence belongs to the ltmS family.

Its subcellular location is the membrane. In terms of biological role, part of the gene cluster that mediates the biosynthesis of lolitrems, indole-diterpene mycotoxins that are potent tremorgens in mammals, and are synthesized by clavicipitaceous fungal endophytes in association with their grass hosts. The geranylgeranyl diphosphate (GGPP) synthase ltmG is proposed to catalyze the first step in lolitrem biosynthesis. LtmG catalyzes a series of iterative condensations of isopentenyl diphosphate (IPP) with dimethylallyl diphosphate (DMAPP), geranyl diphosphate (GPP), and farnesyl diphosphate (FPP), to form GGPP. GGPP then condenses with indole-3-glycerol phosphate to form 3-geranylgeranylindole, an acyclic intermediate, to be incorporated into paxilline. Either ltmG or ltmC could be responsible for this step, as both are putative prenyl transferases. The FAD-dependent monooxygenase ltmM then catalyzes the epoxidation of the two terminal alkenes of the geranylgeranyl moiety, which is subsequently cyclized by ltmB, to paspaline. The cytochrome P450 monooxygenases ltmQ and ltmP can sequentially oxidize paspaline to terpendole E and terpendole F. Alternatively, ltmP converts paspaline to an intermediate which is oxidized by ltmQ to terpendole F. LtmF, ltmK, ltmE and ltmJ appear to be unique to the epichloe endophytes. The prenyltransferase ltmF is involved in the 27-hydroxyl-O-prenylation. The cytochrome P450 monooxygenase ltmK is required for the oxidative acetal ring formation. The multi-functional prenyltransferase ltmE is required for C20- and C21-prenylations of the indole ring of paspalanes and acts together with the cytochrome P450 monooxygenase ltmJ to yield lolitremanes by multiple oxidations and ring closures. The stereoisomer pairs of lolitriol and lolitrem N or lolitrem B and lolitrem F may be attributed to variations in the way in which ring closure can occur under the action of ltmJ. While the major product of this pathway is lolitrem B, the prenyl transferases and cytochrome P450 monooxygenases identified in this pathway have a remarkable versatility in their regio- and stereo-specificities to generate a diverse range of metabolites that are products of a metabolic grid rather than a linear pathway. In Epichloe festucae (strain Fl1), this protein is Lolitrem B biosynthesis cluster protein S.